We begin with the raw amino-acid sequence, 249 residues long: 5'-nucleotidase SurE (249 aa).

A divalent metal cation contacts are provided by aspartate 8, aspartate 9, serine 39, and asparagine 91.

It belongs to the SurE nucleotidase family. A divalent metal cation is required as a cofactor.

It localises to the cytoplasm. The catalysed reaction is a ribonucleoside 5'-phosphate + H2O = a ribonucleoside + phosphate. In terms of biological role, nucleotidase that shows phosphatase activity on nucleoside 5'-monophosphates. This is 5'-nucleotidase SurE from Pseudomonas savastanoi pv. phaseolicola (strain 1448A / Race 6) (Pseudomonas syringae pv. phaseolicola (strain 1448A / Race 6)).